Reading from the N-terminus, the 338-residue chain is mRNA decay activator protein ZFP36L1 (338 aa).

Positions 1 to 111 are necessary and sufficient for the association with mRNA decay enzymes and mRNA decay activation; it reads MTTTLVSATI…QKQPGGGQVN (111 aa). Ser-54 carries the post-translational modification Phosphoserine; by MAPKAPK2. Ser-90 carries the post-translational modification Phosphoserine; by PKB/AKT1. The residue at position 92 (Ser-92) is a Phosphoserine; by PKB/AKT1 and MAPKAPK2. The tract at residues 93–113 is disordered; the sequence is EGGERLLPTQKQPGGGQVNSS. 2 C3H1-type zinc fingers span residues 114 to 142 and 152 to 180; these read RYKTELCRPFEENGACKYGDKCQFAHGIH and KYKTELCRTFHTIGFCPYGPRCHFIHNAE. Residues 185 to 338 form a necessary for mRNA decay activation region; it reads LAGARDLSAD…IFSRLSISDD (154 aa). At Ser-203 the chain carries Phosphoserine; by PKB/AKT1 and MAPKAPK2. The segment at 273 to 338 is disordered; that stretch reads SPTTFLFRPM…IFSRLSISDD (66 aa). The span at 296-318 shows a compositional bias: low complexity; it reads QDSLSDQEGYLSSSSSSHSGSDS. A Phosphoserine modification is found at Ser-318. Position 334 is a phosphoserine; by RPS6KA1 (Ser-334).

As to quaternary structure, associates with the cytoplasmic CCR4-NOT deadenylase and RNA exosome complexes to trigger ARE-containing mRNA deadenylation and decay processes. Interacts with CNOT1. Interacts (via N-terminus) with CNOT6. Interacts with CNOT7; this interaction is inhibited in response to phorbol 12-myristate 13-acetate (PMA) treatment in a p38 MAPK-dependent manner. Interacts with DCP1A. Interacts (via N-terminus) with DCP2. Interacts (via N-terminus) with EXOSC2. Interacts with XRN1. Interacts (via phosphorylated form) with YWHAB; this interaction occurs in a protein kinase AKT1-dependent manner. Interacts (via phosphorylated form) with YWHAZ; this interaction occurs in a p38 MAPK- and AKT-signaling pathways. Post-translationally, phosphorylated. Phosphorylated by RPS6KA1 at Ser-334 upon phorbol 12-myristate 13-acetate (PMA) treatment; this phosphorylation results in dissociation of the CCR4-NOT deadenylase complex and induces p38 MAPK-mediated stabilization of the low-density lipoprotein receptor LDLR mRNA. Phosphorylated by protein kinase AKT1 at Ser-92 and Ser-203 in response to insulin; these phosphorylations stabilize ZFP36L1, increase the association with 14-3-3 proteins and mediate ARE-containing mRNA stabilization. AKT1-mediated phosphorylation at Ser-92 does not impair ARE-containing RNA-binding. Phosphorylated at Ser-54, Ser-92 and Ser-203 by MAPKAPK2; these phosphorylations increase the association with 14-3-3 proteins and mediate ARE-containing mRNA stabilization in a protein kinase AKT1-independent manner. MAPKAPK2-mediated phosphorylations at Ser-54, Ser-92 and Ser-203 do not impair ARE-containing RNA-binding. Phosphorylations increase the association with 14-3-3 proteins and mediate ARE-containing mRNA stabilization during early adipogenesis in a p38 MAPK- and AKT-dependent manner. Ubiquitinated. Ubiquitination leads to proteasomal degradation, a process inhibited by phosphorylations at Ser-90, Ser-92 and Ser-203. In terms of tissue distribution, expressed mainly in the basal epidermal layer, weakly in the suprabasal epidermal layers. Expressed in epidermal keratinocytes (at protein level). Expressed in osteoblasts.

It localises to the nucleus. The protein resides in the cytoplasm. It is found in the cytoplasmic granule. Its subcellular location is the P-body. Zinc-finger RNA-binding protein that destabilizes several cytoplasmic AU-rich element (ARE)-containing mRNA transcripts by promoting their poly(A) tail removal or deadenylation, and hence provide a mechanism for attenuating protein synthesis. Acts as a 3'-untranslated region (UTR) ARE mRNA-binding adapter protein to communicate signaling events to the mRNA decay machinery. Functions by recruiting the CCR4-NOT deadenylase complex and components of the cytoplasmic RNA decay machinery to the bound ARE-containing mRNAs, and hence promotes ARE-mediated mRNA deadenylation and decay processes. Also induces the degradation of ARE-containing mRNAs even in absence of poly(A) tail. Binds to 3'-UTR ARE of numerous mRNAs. Positively regulates early adipogenesis by promoting ARE-mediated mRNA decay of immediate early genes (IEGs). Promotes ARE-mediated mRNA decay of mineralocorticoid receptor NR3C2 mRNA in response to hypertonic stress. Negatively regulates hematopoietic/erythroid cell differentiation by promoting ARE-mediated mRNA decay of the transcription factor STAT5B mRNA. Positively regulates monocyte/macrophage cell differentiation by promoting ARE-mediated mRNA decay of the cyclin-dependent kinase CDK6 mRNA. Promotes degradation of ARE-containing pluripotency-associated mRNAs in embryonic stem cells (ESCs), such as NANOG, through a fibroblast growth factor (FGF)-induced MAPK-dependent signaling pathway, and hence attenuates ESC self-renewal and positively regulates mesendoderm differentiation. May play a role in mediating pro-apoptotic effects in malignant B-cells by promoting ARE-mediated mRNA decay of BCL2 mRNA. In association with ZFP36L2 maintains quiescence on developing B lymphocytes by promoting ARE-mediated decay of several mRNAs encoding cell cycle regulators that help B cells progress through the cell cycle, and hence ensuring accurate variable-diversity-joining (VDJ) recombination and functional immune cell formation. Together with ZFP36L2 is also necessary for thymocyte development and prevention of T-cell acute lymphoblastic leukemia (T-ALL) transformation by promoting ARE-mediated mRNA decay of the oncogenic transcription factor NOTCH1 mRNA. Participates in the delivery of target ARE-mRNAs to processing bodies (PBs). In addition to its cytosolic mRNA-decay function, plays a role in the regulation of nuclear mRNA 3'-end processing; modulates mRNA 3'-end maturation efficiency of the DLL4 mRNA through binding with an ARE embedded in a weak noncanonical polyadenylation (poly(A)) signal in endothelial cells. Also involved in the regulation of stress granule (SG) and P-body (PB) formation and fusion. Plays a role in vasculogenesis and endocardial development. Plays a role in the regulation of keratinocyte proliferation, differentiation and apoptosis. Plays a role in myoblast cell differentiation. The polypeptide is mRNA decay activator protein ZFP36L1 (Homo sapiens (Human)).